The following is a 349-amino-acid chain: Probable ethanolamine kinase (349 aa).

The protein belongs to the choline/ethanolamine kinase family.

It localises to the cytoplasm. The catalysed reaction is ethanolamine + ATP = phosphoethanolamine + ADP + H(+). It participates in phospholipid metabolism; phosphatidylethanolamine biosynthesis; phosphatidylethanolamine from ethanolamine: step 1/3. Highly specific for ethanolamine phosphorylation. May be a rate-controlling step in phosphatidylethanolamine biosynthesis. The sequence is that of Probable ethanolamine kinase (etnk) from Nematostella vectensis (Starlet sea anemone).